The chain runs to 151 residues: Probable cGMP 3',5'-cyclic phosphodiesterase subunit delta (151 aa).

It belongs to the PDE6D/unc-119 family. As to quaternary structure, interacts with Pde6.

It is found in the nucleus. It localises to the cytoplasm. The chain is Probable cGMP 3',5'-cyclic phosphodiesterase subunit delta from Drosophila mojavensis (Fruit fly).